A 363-amino-acid chain; its full sequence is MRTKAYALALKGMFTMSPERIHHIITRGMQLVQAISPLRRAVGSILPVNDPILRQEVFGVTFPQPLGLAAGFDKNGEAPDVWAAFGFGYAELGTVTASPQPGNPTPRLFRLPADKAILNRMGFNNLGAAEVAKNLKRRKSDAVIGINIGKTKVVASKDAVNDYRRSALLLGNLADYLVINVSSPNTPGLRDLQAVESLRPIIAAVQESTSVPVLVKIAPDLSDDDIDAVADLAVEMGIAGIVATNTTISRNGLRTPHQDVADMGAGGISGAPVAQRSLEVLERLYAHVGTEMVLIGVGGISTPQQAWERIAAGATLLQGYTGMIYGGPDWIRDIHLGIAAQLRAHDLSSIDQAVGSKLPWTLQ.

FMN is bound by residues 70–74 (AGFDK) and Thr94. Residue Lys74 participates in substrate binding. 119–123 (NRMGF) serves as a coordination point for substrate. 2 residues coordinate FMN: Asn147 and Asn180. Asn180 contributes to the substrate binding site. Ser183 serves as the catalytic Nucleophile. Substrate is bound at residue Asn185. FMN is bound by residues Lys216 and Thr244. 245–246 (NT) is a binding site for substrate. FMN-binding positions include Gly270, Gly299, and 320–321 (YT).

Belongs to the dihydroorotate dehydrogenase family. Type 2 subfamily. As to quaternary structure, monomer. Requires FMN as cofactor.

The protein resides in the cell membrane. It carries out the reaction (S)-dihydroorotate + a quinone = orotate + a quinol. It functions in the pathway pyrimidine metabolism; UMP biosynthesis via de novo pathway; orotate from (S)-dihydroorotate (quinone route): step 1/1. Functionally, catalyzes the conversion of dihydroorotate to orotate with quinone as electron acceptor. This is Dihydroorotate dehydrogenase (quinone) from Corynebacterium diphtheriae (strain ATCC 700971 / NCTC 13129 / Biotype gravis).